Consider the following 172-residue polypeptide: Small ribosomal subunit protein uS5 (172 aa).

The S5 DRBM domain maps to 16–79; that stretch reads LKEKLVHINR…EDGKKNVIKV (64 aa).

The protein belongs to the universal ribosomal protein uS5 family. In terms of assembly, part of the 30S ribosomal subunit. Contacts proteins S4 and S8.

Functionally, with S4 and S12 plays an important role in translational accuracy. In terms of biological role, located at the back of the 30S subunit body where it stabilizes the conformation of the head with respect to the body. The sequence is that of Small ribosomal subunit protein uS5 from Chlorobium phaeobacteroides (strain DSM 266 / SMG 266 / 2430).